The following is a 626-amino-acid chain: Nuclear receptor subfamily 4 group A member 3 (626 aa).

An activation function (AF)-1 domain region spans residues 1 to 108 (MPCVQAQYSP…HHHHHHHHHH (108 aa)). Residues 1-138 (MPCVQAQYSP…PSTSMYFKQS (138 aa)) form a required for DNA-PK heterotrimer region. Positions 1-291 (MPCVQAQYSP…SRSSSSGEGT (291 aa)) are interaction with NCOA1, NCOA2, NCOA3 and KAT2B. Disordered stretches follow at residues 92 to 152 (PSYH…PPQA), 192 to 211 (HFKP…GHHL), and 265 to 284 (PTAS…PSRS). Residues 93–110 (SYHHHHHHHHHHHHHHQQ) are compositionally biased toward basic residues. Pro residues-rich tracts occupy residues 140-149 (PSTPTTPAFP) and 195-204 (PSPPHPPAPS). Low complexity predominate over residues 268 to 284 (SSLLGESPSLPSPPSRS). Positions 289-364 (EGTCAVCGDN…VGMVKEVVRT (76 aa)) form a DNA-binding region, nuclear receptor. NR C4-type zinc fingers lie at residues 292 to 312 (CAVC…CEGC) and 328 to 352 (CLAN…FQKC). The interval 364 to 394 (TDSLKGRRGRLPSKPKSPLQQEPSQPSPPSP) is disordered. Over residues 377-387 (KPKSPLQQEPS) the composition is skewed to low complexity. The tract at residues 379–626 (KSPLQQEPSQ…DKLFLDTLPF (248 aa)) is interaction with KAT2B. The NR LBD domain occupies 394-623 (PPICMMNALV…SIIDKLFLDT (230 aa)).

This sequence belongs to the nuclear hormone receptor family. NR4 subfamily. Interacts with SIX3 (via homeobox); differentially regulates the transcriptional activities of NR4A3. Interacts with the constituents of DNA-PK heterotrimer PRKDC, XRCC6 and XRCC5; phosphorylates and prevents NR4A3 ubiquitinylation and degradation. Interacts with NCOA2; potentiates the activity of the NR4A3. Interacts with NCOA1, NCOA3, MED1 and KAT2B. Interacts with EP300 and NCOA2; mediates the recruitment of MED1 in the coactivator complex. Interacts with NR3C1 (via nuclear receptor DNA-binding domain); the interactions represses transcription activity of NR4A3 on the POMC promoter Nur response element (NurRE). Interacts with TRIM28; the interactions potentiates NR4A3 activity on NurRE promoter. Binds DNA as a monomer and homodimer. Interacts with PARP1; activates PARP1 by improving acetylation of PARP1 and suppressing the interaction between PARP1 and SIRT1. Phosphorylated by PRKDC. In terms of tissue distribution, isoform alpha is highly expressed in skeletal muscle. Isoform beta is highly expressed in skeletal muscle and low expressed in fetal brain and placenta.

It localises to the nucleus. In terms of biological role, transcriptional activator that binds to regulatory elements in promoter regions in a cell- and response element (target)-specific manner. Induces gene expression by binding as monomers to the NR4A1 response element (NBRE) 5'-AAAAGGTCA-3' site and as homodimers to the Nur response element (NurRE) site in the promoter of their regulated target genes. Plays a role in the regulation of proliferation, survival and differentiation of many different cell types and also in metabolism and inflammation. Mediates proliferation of vascular smooth muscle, myeloid progenitor cell and type B pancreatic cells; promotes mitogen-induced vascular smooth muscle cell proliferation through transactivation of SKP2 promoter by binding a NBRE site. Upon PDGF stimulation, stimulates vascular smooth muscle cell proliferation by regulating CCND1 and CCND2 expression. In islets, induces type B pancreatic cell proliferation through up-regulation of genes that activate cell cycle, as well as genes that cause degradation of the CDKN1A. Negatively regulates myeloid progenitor cell proliferation by repressing RUNX1 in a NBRE site-independent manner. During inner ear, plays a role as a key mediator of the proliferative growth phase of semicircular canal development. Also mediates survival of neuron and smooth muscle cells; mediates CREB-induced neuronal survival, and during hippocampus development, plays a critical role in pyramidal cell survival and axonal guidance. Is required for S phase entry of the cell cycle and survival of smooth muscle cells by inducing CCND1, resulting in RB1 phosphorylation. Binds to NBRE motif in CCND1 promoter, resulting in the activation of the promoter and CCND1 transcription. Also plays a role in inflammation; upon TNF stimulation, mediates monocyte adhesion by inducing the expression of VCAM1 and ICAM1 by binding to the NBRE consensus site. In mast cells activated by Fc-epsilon receptor cross-linking, promotes the synthesis and release of cytokines but impairs events leading to degranulation. Also plays a role in metabolism; by modulating feeding behavior; and by playing a role in energy balance by inhibiting the glucocorticoid-induced orexigenic neuropeptides AGRP expression, at least in part by forming a complex with activated NR3C1 on the AGRP- glucocorticoid response element (GRE), and thus weakening the DNA binding activity of NR3C1. Upon catecholamines stimulation, regulates gene expression that controls oxidative metabolism in skeletal muscle. Plays a role in glucose transport by regulating translocation of the SLC2A4 glucose transporter to the cell surface. Finally, during gastrulation plays a crucial role in the formation of anterior mesoderm by controlling cell migration. Inhibits adipogenesis. Also participates in cardiac hypertrophy by activating PARP1. The sequence is that of Nuclear receptor subfamily 4 group A member 3 (NR4A3) from Homo sapiens (Human).